We begin with the raw amino-acid sequence, 154 residues long: Ribosome maturation factor RimP (154 aa).

Belongs to the RimP family.

It localises to the cytoplasm. Functionally, required for maturation of 30S ribosomal subunits. The polypeptide is Ribosome maturation factor RimP (Carboxydothermus hydrogenoformans (strain ATCC BAA-161 / DSM 6008 / Z-2901)).